The following is a 133-amino-acid chain: Urease subunit beta (133 aa).

The tract at residues 106 to 133 is disordered; sequence VFRPNDSNQNAAVKNDAGEDNANKKGGK.

Belongs to the urease beta subunit family. Heterotrimer of UreA (gamma), UreB (beta) and UreC (alpha) subunits. Three heterotrimers associate to form the active enzyme.

It is found in the cytoplasm. It carries out the reaction urea + 2 H2O + H(+) = hydrogencarbonate + 2 NH4(+). Its pathway is nitrogen metabolism; urea degradation; CO(2) and NH(3) from urea (urease route): step 1/1. In Staphylococcus epidermidis (strain ATCC 12228 / FDA PCI 1200), this protein is Urease subunit beta.